An 833-amino-acid polypeptide reads, in one-letter code: Leucine--tRNA ligase (833 aa).

A 'HIGH' region motif is present at residues 41–52 (PYPSGAGLHVGH). A 'KMSKS' region motif is present at residues 610–614 (KMSKS). Lysine 613 is an ATP binding site.

The protein belongs to the class-I aminoacyl-tRNA synthetase family.

Its subcellular location is the cytoplasm. It catalyses the reaction tRNA(Leu) + L-leucine + ATP = L-leucyl-tRNA(Leu) + AMP + diphosphate. The polypeptide is Leucine--tRNA ligase (Streptococcus pneumoniae (strain ATCC 700669 / Spain 23F-1)).